The sequence spans 305 residues: Methionyl-tRNA formyltransferase (305 aa).

Residue 110–113 (SLLP) participates in (6S)-5,6,7,8-tetrahydrofolate binding.

This sequence belongs to the Fmt family.

It carries out the reaction L-methionyl-tRNA(fMet) + (6R)-10-formyltetrahydrofolate = N-formyl-L-methionyl-tRNA(fMet) + (6S)-5,6,7,8-tetrahydrofolate + H(+). Attaches a formyl group to the free amino group of methionyl-tRNA(fMet). The formyl group appears to play a dual role in the initiator identity of N-formylmethionyl-tRNA by promoting its recognition by IF2 and preventing the misappropriation of this tRNA by the elongation apparatus. This Ureaplasma parvum serovar 3 (strain ATCC 700970) protein is Methionyl-tRNA formyltransferase.